The chain runs to 2837 residues: Probable polyketide synthase 3 (2837 aa).

The Ketosynthase family 3 (KS3) domain maps to 39–464; that stretch reads NNGIGIIGIG…GSNVCIILKD (426 aa). Active-site for beta-ketoacyl synthase activity residues include Cys209, His348, and His388. The acyl/malonyl transferase stretch occupies residues 664 to 697; it reads GIKPTFIVGHSLGEVTAAYCSGMIDLETECYLIY. The active-site For acyl/malonyl transferase activity is Ser674. The interval 962-1084 is N-terminal hotdog fold; it reads IDILGNSITD…GNFQLFKHNG (123 aa). Positions 962–1255 constitute a PKS/mFAS DH domain; it reads IDILGNSITD…CTSLTPIQDS (294 aa). His995 functions as the Proton acceptor; for dehydratase activity in the catalytic mechanism. A C-terminal hotdog fold region spans residues 1106–1255; the sequence is NLTKLTKEDL…CTSLTPIQDS (150 aa). Residue Asp1169 is the Proton donor; for dehydratase activity of the active site. In terms of domain architecture, Carrier spans 2330–2407; sequence DNKNSVNQMF…SSIKIITNSL (78 aa). O-(pantetheine 4'-phosphoryl)serine is present on Ser2367. Residues 2464-2484 form a helical membrane-spanning segment; the sequence is KVILLSGSTGFLGGYLLLNLV.

Pantetheine 4'-phosphate is required as a cofactor.

The protein resides in the membrane. In terms of biological role, probable polyketide synthase. The sequence is that of Probable polyketide synthase 3 (pks3) from Dictyostelium discoideum (Social amoeba).